The sequence spans 153 residues: ORM1-like protein 1 (153 aa).

Residues 1–26 (MNVGVAHSEVNPNTRVMNSRGMWLTY) lie on the Cytoplasmic side of the membrane. A run of 2 helical transmembrane segments spans residues 27–46 (ALGV…FSVP) and 47–67 (VAWT…LHAV). The Cytoplasmic segment spans residues 68 to 100 (KGTPFETPDQGKARLLTHWEQLDYGVQFTSSRK). The chain crosses the membrane as a helical span at residues 101–121 (FLTISPIILYFLASFYTKYDP). The Extracellular portion of the chain corresponds to 122–123 (TH). The chain crosses the membrane as a helical span at residues 124–144 (FFINTASLLSVLIPKLPQLHG). The Cytoplasmic segment spans residues 145-153 (VRIFGINKY).

This sequence belongs to the ORM family. As to quaternary structure, ceramide-sensitive subunit of the serine palmitoyltransferase (SPT) complex, which is also composed of SPTLC1, SPTLC2/3 and SPTSSA/B.

The protein resides in the endoplasmic reticulum membrane. Functionally, plays an essential role in the homeostatic regulation of sphingolipid de novo biosynthesis by modulating the activity of the serine palmitoyltransferase (SPT) in response to ceramide levels. When complexed to SPT, the binding of ceramides to its N-terminus stabilizes a conformation that block SPT substrate entry, hence preventing SPT catalytic activity. Through this mechanism, maintains ceramide levels at sufficient concentrations for the production of complex sphingolipids, but which prevents the accumulation of ceramides to levels that trigger apoptosis. The sequence is that of ORM1-like protein 1 (ormdl1) from Xenopus laevis (African clawed frog).